Reading from the N-terminus, the 363-residue chain is Trichocyst matrix protein T4-A (363 aa).

Positions 1–17 are cleaved as a signal peptide; that stretch reads MARSLTILAIVFAVATA. Residues 18–52 constitute a propeptide that is removed on maturation; the sequence is RVTKSESPKEILAQVNKDSFGNSILSVLQLQLATG. Residues 85 to 119 adopt a coiled-coil conformation; that stretch reads VAFEKIIADLEQEIAYHQTQIVALSNLRDSTTEAL. Residues 190–221 constitute a propeptide that is removed on maturation; sequence RFEKVQAKLMESKHALFKPLINALTQLASKVD. The stretch at 244-352 forms a coiled coil; that stretch reads ASLLATEERQ…EVLTQKLSAA (109 aa).

It belongs to the TMP family. Post-translationally, two components are produced by post-translational processing from the precursor peptide.

Its subcellular location is the trichocyst. In terms of biological role, structural protein that crystallize inside the trichocyst matrix. In Paramecium tetraurelia, this protein is Trichocyst matrix protein T4-A (T4A).